Consider the following 343-residue polypeptide: uncharacterized protein (343 aa).

This is an uncharacterized protein from Methanocaldococcus jannaschii (strain ATCC 43067 / DSM 2661 / JAL-1 / JCM 10045 / NBRC 100440) (Methanococcus jannaschii).